The sequence spans 634 residues: DNA-directed RNA polymerase subunit gamma (634 aa).

Residues Cys74, Cys76, Cys89, and Cys92 each coordinate Zn(2+). Mg(2+) is bound by residues Asp471, Asp473, and Asp475.

It belongs to the RNA polymerase beta' chain family. RpoC1 subfamily. In cyanobacteria the RNAP catalytic core is composed of 2 alpha, 1 beta, 1 beta', 1 gamma and 1 omega subunit. When a sigma factor is associated with the core the holoenzyme is formed, which can initiate transcription. It depends on Mg(2+) as a cofactor. Zn(2+) serves as cofactor.

The enzyme catalyses RNA(n) + a ribonucleoside 5'-triphosphate = RNA(n+1) + diphosphate. In terms of biological role, DNA-dependent RNA polymerase catalyzes the transcription of DNA into RNA using the four ribonucleoside triphosphates as substrates. The chain is DNA-directed RNA polymerase subunit gamma from Prochlorococcus marinus (strain SARG / CCMP1375 / SS120).